A 336-amino-acid polypeptide reads, in one-letter code: Ketol-acid reductoisomerase (NADP(+)) (336 aa).

The region spanning 3–183 is the KARI N-terminal Rossmann domain; it reads AKMYYDRDVD…GCTKAGVLET (181 aa). NADP(+) is bound by residues 26–29, arginine 49, serine 52, serine 54, and 84–87; these read YGSQ and DEQQ. The active site involves histidine 109. Glycine 135 is a binding site for NADP(+). Residues 184–329 form the KARI C-terminal knotted domain; that stretch reads TFKEETETDL…KELRDQMPFI (146 aa). Positions 192, 196, 228, and 232 each coordinate Mg(2+). Serine 253 lines the substrate pocket.

This sequence belongs to the ketol-acid reductoisomerase family. Mg(2+) is required as a cofactor.

The catalysed reaction is (2R)-2,3-dihydroxy-3-methylbutanoate + NADP(+) = (2S)-2-acetolactate + NADPH + H(+). It catalyses the reaction (2R,3R)-2,3-dihydroxy-3-methylpentanoate + NADP(+) = (S)-2-ethyl-2-hydroxy-3-oxobutanoate + NADPH + H(+). It functions in the pathway amino-acid biosynthesis; L-isoleucine biosynthesis; L-isoleucine from 2-oxobutanoate: step 2/4. It participates in amino-acid biosynthesis; L-valine biosynthesis; L-valine from pyruvate: step 2/4. In terms of biological role, involved in the biosynthesis of branched-chain amino acids (BCAA). Catalyzes an alkyl-migration followed by a ketol-acid reduction of (S)-2-acetolactate (S2AL) to yield (R)-2,3-dihydroxy-isovalerate. In the isomerase reaction, S2AL is rearranged via a Mg-dependent methyl migration to produce 3-hydroxy-3-methyl-2-ketobutyrate (HMKB). In the reductase reaction, this 2-ketoacid undergoes a metal-dependent reduction by NADPH to yield (R)-2,3-dihydroxy-isovalerate. The polypeptide is Ketol-acid reductoisomerase (NADP(+)) (Deinococcus radiodurans (strain ATCC 13939 / DSM 20539 / JCM 16871 / CCUG 27074 / LMG 4051 / NBRC 15346 / NCIMB 9279 / VKM B-1422 / R1)).